Reading from the N-terminus, the 162-residue chain is Glutathione peroxidase-like peroxiredoxin 2 (162 aa).

Cysteine 37 (cysteine sulfenic acid (-SOH) intermediate) is an active-site residue. Residues cysteine 37 and cysteine 83 are joined by a disulfide bond.

The protein belongs to the glutathione peroxidase family. As to quaternary structure, monomer.

It localises to the cytoplasm. Its subcellular location is the nucleus. The protein resides in the mitochondrion outer membrane. It is found in the mitochondrion inner membrane. The enzyme catalyses a hydroperoxide + [thioredoxin]-dithiol = an alcohol + [thioredoxin]-disulfide + H2O. Its function is as follows. Glutathione peroxidase-like protein that protects cells from phospholipid hydroperoxides and nonphospholipid peroxides during oxidative stress. Plays an important role in the oxidative stress-induced response in the presence of Ca(2+). Has peroxidase activity using preferentially thioredoxin as a reducing power. The redox state of the mitochondrial GPX2 is regulated by TRX1 and TRX2 (cytoplasmic thioredoxin), and by TRX3 (mitochondrial matrix thioredoxin). Involved in sporulation. The sequence is that of Glutathione peroxidase-like peroxiredoxin 2 from Saccharomyces cerevisiae (strain ATCC 204508 / S288c) (Baker's yeast).